Reading from the N-terminus, the 2522-residue chain is Unconventional myosin-IXAa (2522 aa).

The Ras-associating domain maps to 15–113; sequence SELTLRIYPG…YRFLLREKNL (99 aa). The Myosin motor domain maps to 147-1007; sequence KDFDDLCNLP…ERQRLQDLLH (861 aa). The chain crosses the membrane as a helical span at residues 176–196; the sequence is IYTYVGSILIVINPFKFLPIY. 240 to 247 serves as a coordination point for ATP; that stretch reads GESGSGKT. The interval 767-802 is disordered; it reads VNRRNPRTPLSDLQGSNAINQREGWNGRPGRQNRLS. Positions 777–786 are enriched in polar residues; it reads SDLQGSNAIN. The actin-binding stretch occupies residues 888–910; it reads LNKLMETLGQSQPYFVKCIRSNS. IQ domains follow at residues 1012-1039, 1063-1092, 1102-1131, and 1125-1154; these read SRIV…AACQ, QEGA…ASVL, QRRA…ATIR, and QRDA…QRLK. Residues 1012–1149 are neck or regulatory domain; that stretch reads SRIVYLQRRF…LARQRFRELQ (138 aa). Positions 1150–2497 are tail; it reads KQRLKITHLP…LQGAKSSPQR (1348 aa). Disordered stretches follow at residues 1218-1254, 1318-1409, 1424-1612, 1630-1754, 1799-1827, and 1962-1983; these read GMAP…RRMR, DKAP…STRR, NEAD…GNIF, NQEK…GRVR, RLSP…VKRR, and LDSS…KDTD. Positions 1229 to 1242 are enriched in basic and acidic residues; sequence TIRERPRTLEDPNQ. Polar residues-rich tracts occupy residues 1330 to 1349 and 1366 to 1390; these read SPSS…STPD and SLPT…NSVT. Basic and acidic residues-rich tracts occupy residues 1399–1408 and 1426–1435; these read PSKDKKESTR and ADVKPLEVKD. A compositionally biased stretch (polar residues) spans 1437 to 1454; that stretch reads AAQTSEPPSPAQPSTDSS. Residues 1456–1525 adopt a coiled-coil conformation; the sequence is VLEKLEKLNE…LRRIEQSRQE (70 aa). Composition is skewed to basic and acidic residues over residues 1458 to 1484, 1492 to 1523, 1549 to 1566, and 1580 to 1589; these read EKLE…EMME, ILEE…EQSR, PARE…RPKD, and LESRGDEARS. Composition is skewed to polar residues over residues 1594 to 1604 and 1631 to 1641; these read KPSNQNVNISM and QEKTPGAQNEV. Basic residues predominate over residues 1656 to 1665; it reads PGHKKARMAR. Residues 1681–1690 show a composition bias toward acidic residues; the sequence is GESEEEEYDE. Composition is skewed to basic and acidic residues over residues 1738–1753 and 1810–1822; these read LGKH…DGRV and LQRE…EPSP. The segment at 1990 to 2039 adopts a Phorbol-ester/DAG-type zinc-finger fold; that stretch reads GHIFKSTQYSIPTYCEYCSSLIWMMDKACVCKLCRYACHRKCCQKMTTKC. The Rho-GAP domain occupies 2054–2242; it reads VELSRLTNDE…LIICEQMNKY (189 aa). Disordered stretches follow at residues 2274-2325 and 2348-2522; these read PVHR…QEEK and LEPR…EFMV. A coiled-coil region spans residues 2317-2344; that stretch reads QVAMQQEEKVLTEQIESLQKEKEELTFE. The span at 2366–2383 shows a compositional bias: polar residues; the sequence is TADSSENLNVDSEGATSD. Positions 2413 to 2429 are enriched in low complexity; sequence SLDSIDSCSTVSSVSSS. Residues 2436–2448 show a composition bias toward basic residues; it reads RTHKLSLRSKSPS. Residues 2497–2506 show a composition bias toward basic and acidic residues; the sequence is RHREQKKDPE.

This sequence belongs to the TRAFAC class myosin-kinesin ATPase superfamily. Myosin family.

The protein resides in the membrane. Its subcellular location is the cytoplasm. It is found in the synapse. The protein localises to the cell projection. It localises to the growth cone. Its function is as follows. Myosins are actin-based motor molecules with ATPase activity. Unconventional myosins serve in intracellular movements. Regulates Rho by stimulating it's GTPase activity in neurons. Required for the regulation of neurite branching and motor neuron axon guidance. This Danio rerio (Zebrafish) protein is Unconventional myosin-IXAa (myo9aa).